We begin with the raw amino-acid sequence, 148 residues long: Large ribosomal subunit protein bL9 (148 aa).

The protein belongs to the bacterial ribosomal protein bL9 family.

Functionally, binds to the 23S rRNA. This Agathobacter rectalis (strain ATCC 33656 / DSM 3377 / JCM 17463 / KCTC 5835 / VPI 0990) (Eubacterium rectale) protein is Large ribosomal subunit protein bL9.